The primary structure comprises 222 residues: Eukaryotic translation initiation factor 3 subunit K (222 aa).

The 163-residue stretch at 46 to 208 (YDLEANLAVL…KIKTKNITEK (163 aa)) folds into the PCI domain.

Belongs to the eIF-3 subunit K family. Component of the eukaryotic translation initiation factor 3 (eIF-3) complex. The eIF-3 complex interacts with pix.

The protein localises to the cytoplasm. Functionally, component of the eukaryotic translation initiation factor 3 (eIF-3) complex, which is involved in protein synthesis of a specialized repertoire of mRNAs and, together with other initiation factors, stimulates binding of mRNA and methionyl-tRNAi to the 40S ribosome. The eIF-3 complex specifically targets and initiates translation of a subset of mRNAs involved in cell proliferation. The sequence is that of Eukaryotic translation initiation factor 3 subunit K from Drosophila virilis (Fruit fly).